Here is an 86-residue protein sequence, read N- to C-terminus: CLAVATA3/ESR (CLE)-related protein 8 (86 aa).

The first 24 residues, 1–24 (MKVLKRDSMLLLITLYFLLTTSMA), serve as a signal peptide directing secretion. The tract at residues 43–86 (DLKQNKAKPHLPNLFRTMRRVPTGPNPLHHISPPQPGSLNYARN) is disordered. P64 and P67 each carry hydroxyproline. O-linked (Ara...) hydroxyproline glycosylation occurs at P67.

This sequence belongs to the CLV3/ESR signal peptide family. In terms of processing, the O-glycosylation (arabinosylation) of the hydroxyproline Pro-67 enhances binding affinity of the CLE8p peptide for its receptor. In terms of tissue distribution, mostly expressed in siliques, and, to a lower extent, in flowers. Expressed in young embryos and endosperm.

It localises to the secreted. It is found in the extracellular space. Functionally, extracellular signal peptide that regulates cell fate. Represses root apical meristem maintenance. Positively regulates the expression of the transcription factor WOX8 and thus, regulates early embryo development. Regulates the transition of protophloem cells from proliferation to differentiation, thus impinging on postembryonic growth capacity of the root meristem; this signaling pathway requires CRN and CLV2. The sequence is that of CLAVATA3/ESR (CLE)-related protein 8 from Arabidopsis thaliana (Mouse-ear cress).